The chain runs to 88 residues: Small ribosomal subunit protein bS21 (88 aa).

A disordered region spans residues 58–88 (ARKRAQREGLLPMTPRPVAAGGAAGAARPPR). Residues 73–88 (RPVAAGGAAGAARPPR) are compositionally biased toward low complexity.

Belongs to the bacterial ribosomal protein bS21 family.

This Mesorhizobium japonicum (strain LMG 29417 / CECT 9101 / MAFF 303099) (Mesorhizobium loti (strain MAFF 303099)) protein is Small ribosomal subunit protein bS21.